We begin with the raw amino-acid sequence, 231 residues long: Urease subunit gamma/beta (231 aa).

A urease gamma region spans residues 1–101 (MLLTPTELER…LVTVHQPIRP (101 aa)). The tract at residues 102 to 231 (GKLPLAVMPT…RARAQHFKGA (130 aa)) is urease beta.

The protein in the N-terminal section; belongs to the urease gamma subunit family. It in the C-terminal section; belongs to the urease beta subunit family. In terms of assembly, heterohexamer of 3 UreC (alpha) and 3 UreAB (gamma/beta) subunits.

The protein localises to the cytoplasm. The enzyme catalyses urea + 2 H2O + H(+) = hydrogencarbonate + 2 NH4(+). The protein operates within nitrogen metabolism; urea degradation; CO(2) and NH(3) from urea (urease route): step 1/1. This chain is Urease subunit gamma/beta, found in Pseudomonas syringae pv. tomato (strain ATCC BAA-871 / DC3000).